A 143-amino-acid chain; its full sequence is Phospholipase A2 isozymes PA3A/PA3B/PA5 (143 aa).

Ca(2+) is bound by residues W10, G12, and G14. 3 disulfide bridges follow: C11/C33, C32/C72, and C39/C65. The active site involves H36. Residue D37 coordinates Ca(2+).

The protein belongs to the phospholipase A2 family. Group III subfamily. Ca(2+) serves as cofactor. As to expression, expressed by the venom gland.

Its subcellular location is the secreted. It catalyses the reaction a 1,2-diacyl-sn-glycero-3-phosphocholine + H2O = a 1-acyl-sn-glycero-3-phosphocholine + a fatty acid + H(+). Functionally, PLA2 catalyzes the calcium-dependent hydrolysis of the 2-acyl groups in 3-sn-phosphoglycerides. The polypeptide is Phospholipase A2 isozymes PA3A/PA3B/PA5 (Heloderma suspectum (Gila monster)).